A 1102-amino-acid chain; its full sequence is Avirulence protein AvrXa10 (1102 aa).

Disordered stretches follow at residues 1 to 68 and 127 to 151; these read MDPI…SAGS and ARPPRAKPAPRRRAAQPSDASPAAQ. A compositionally biased stretch (basic residues) spans 130–140; that stretch reads PRAKPAPRRRA. Positions 141–151 are enriched in low complexity; it reads AQPSDASPAAQ. Core repeat repeat units follow at residues 288-321, 322-355, 356-389, 390-423, 424-457, 458-491, 492-525, 526-559, 560-593, 594-627, 628-661, 662-695, 696-729, 730-763, and 764-797; these read LTPDQVVAIASNIGGNQALETVQRLLPVLCQAHG, LTPDQVVAIASHGGGKQALETVQRLLPVLCQAHG, LTPDQVVAIASNIGGKQALATVQRLLPVLCQDHG, LTPDQVVAIASHGGGKQALETVQRLLPVLCQDHG, LTPDQVVAIASNIGGKQALETVQRLLPVLCQDHG, LTPDQVVAIASNNGGKQALETVQRLLPVLCQTHG, LTPDQVVAIANHDGGKQALETVQRLLPVLCQDHG, LTPDQVVAIASNIGGKQALATVQRLLPVLCQAHG, LTPDQVVAIASHDGGKQALETVQRLLPVLCQDHG, LTPDQVVAIASNNGGKQALETVQRLLPVLCQDHG, LTPAQVVAIANHGGGKQALETVQRLLPVLCQDHG, LTPVQVVAIASNSGGKQALETVQRLLPVLCQDHG, LTPVQVVAIASNGGGKQALATVQRLLPVLCQDHG, and LTPVQVVAIASHDGGKQALETVQRLLPVLCQDHG. One copy of the Core repeat 15.5 repeat lies at 798-809; sequence LTPDQVVAIASN. The Nuclear localization sequence A (NLSA) motif lies at 951-954; that stretch reads KRVK. The span at 978–990 shows a compositional bias: basic and acidic residues; sequence DLDAPSPMHEGDQ. The segment at 978 to 1021 is disordered; the sequence is DLDAPSPMHEGDQTRASSRKRSRSDRAVTGPSTQQSFEVRVPEQ. The Nuclear localization sequence B (NLSB) signature appears at 997–1000; the sequence is KRSR. The Nuclear localization sequence C (NLSC) motif lies at 1034–1037; sequence KRPR. The activation domain stretch occupies residues 1063 to 1093; sequence WEQDAAPFAGAADDFPAFNEEELAWLMELLP.

This sequence belongs to the transcription activator-like effector (TALE) family.

It is found in the secreted. The protein localises to the host nucleus. Avirulence protein. Induces the hypersensitive response (HR)in rice plants carrying the resistance gene Xa10. Activity depends on the presence of the core repeat domains; replacement with repeat domains from other proteins (AvrBs3 of X.euvesicatoria (AC P14727) or AvrXa7 of this organism) does not elicit the HR. Probably acts as a transcription factor in its host plant (rice) to induce plant resistance or disease. This is Avirulence protein AvrXa10 from Xanthomonas oryzae pv. oryzae.